The chain runs to 117 residues: Large ribosomal subunit protein eL18 (117 aa).

Belongs to the eukaryotic ribosomal protein eL18 family.

The chain is Large ribosomal subunit protein eL18 from Archaeoglobus fulgidus (strain ATCC 49558 / DSM 4304 / JCM 9628 / NBRC 100126 / VC-16).